The sequence spans 190 residues: Putative manganese efflux pump MntP (190 aa).

Transmembrane regions (helical) follow at residues 37–57 (LILA…GWGI), 64–84 (LSFI…GVGA), 111–131 (LILG…MAFV), 135–155 (IITL…VGAW), and 164–184 (FGGW…GNIL).

The protein belongs to the MntP (TC 9.B.29) family.

The protein resides in the cell membrane. Functionally, probably functions as a manganese efflux pump. This is Putative manganese efflux pump MntP from Corynebacterium efficiens (strain DSM 44549 / YS-314 / AJ 12310 / JCM 11189 / NBRC 100395).